Consider the following 392-residue polypeptide: S-adenosylmethionine synthase (392 aa).

His-15 contributes to the ATP binding site. Asp-17 contacts Mg(2+). Glu-43 is a K(+) binding site. L-methionine contacts are provided by Glu-56 and Gln-99. The tract at residues 99–109 (QSKDIAQGVDE) is flexible loop. Residues 173–175 (DGK), 239–240 (KF), Asp-248, 254–255 (RK), Ala-271, and Lys-275 contribute to the ATP site. Asp-248 is a binding site for L-methionine. Residue Lys-279 coordinates L-methionine.

Belongs to the AdoMet synthase family. In terms of assembly, homotetramer; dimer of dimers. It depends on Mg(2+) as a cofactor. K(+) serves as cofactor.

The protein resides in the cytoplasm. It catalyses the reaction L-methionine + ATP + H2O = S-adenosyl-L-methionine + phosphate + diphosphate. Its pathway is amino-acid biosynthesis; S-adenosyl-L-methionine biosynthesis; S-adenosyl-L-methionine from L-methionine: step 1/1. In terms of biological role, catalyzes the formation of S-adenosylmethionine (AdoMet) from methionine and ATP. The overall synthetic reaction is composed of two sequential steps, AdoMet formation and the subsequent tripolyphosphate hydrolysis which occurs prior to release of AdoMet from the enzyme. The sequence is that of S-adenosylmethionine synthase from Finegoldia magna (strain ATCC 29328 / DSM 20472 / WAL 2508) (Peptostreptococcus magnus).